Consider the following 312-residue polypeptide: Ornithine carbamoyltransferase (312 aa).

Residues 57-60 (STRT), Gln-84, Arg-108, and 135-138 (HPCQ) contribute to the carbamoyl phosphate site. L-ornithine-binding positions include Asn-166, Asp-226, and 230–231 (SM). Residues 265–266 (CL) and Arg-293 each bind carbamoyl phosphate.

Belongs to the aspartate/ornithine carbamoyltransferase superfamily. OTCase family.

It localises to the cytoplasm. It catalyses the reaction carbamoyl phosphate + L-ornithine = L-citrulline + phosphate + H(+). It participates in amino-acid degradation; L-arginine degradation via ADI pathway; carbamoyl phosphate from L-arginine: step 2/2. In terms of biological role, reversibly catalyzes the transfer of the carbamoyl group from carbamoyl phosphate (CP) to the N(epsilon) atom of ornithine (ORN) to produce L-citrulline. This chain is Ornithine carbamoyltransferase, found in Brucella abortus (strain 2308).